The chain runs to 324 residues: D-erythronate dehydrogenase (324 aa).

3 residues coordinate NAD(+): Ser-125, Tyr-149, and Lys-153. Tyr-149 (proton acceptor) is an active-site residue.

This sequence belongs to the NAD(P)-dependent epimerase/dehydratase family.

It carries out the reaction D-erythronate + NAD(+) = 2-dehydro-D-erythronate + NADH + H(+). Functionally, catalyzes oxidation of D-erythronate to 2-oxo-tetronate. Can use either NAD(+) or NADP(+) as cosubstrate, with a preference for NAD(+). The sequence is that of D-erythronate dehydrogenase from Cupriavidus necator (strain ATCC 17699 / DSM 428 / KCTC 22496 / NCIMB 10442 / H16 / Stanier 337) (Ralstonia eutropha).